We begin with the raw amino-acid sequence, 701 residues long: Protein mono-ADP-ribosyltransferase PARP12 (701 aa).

C3H1-type zinc fingers lie at residues 94–119 (LCRF…HSLT), 150–179 (WLLP…IKLH), and 180–202 (ICQY…HDFS). The tract at residues 234 to 268 (KNKSSAPSRVPPLFVPQGTSERKDSSGSVSPNTLS) is disordered. Residue S258 is modified to Phosphoserine. The span at 259 to 268 (SGSVSPNTLS) shows a compositional bias: polar residues. C3H1-type zinc fingers lie at residues 270–297 (EEGD…HFHL) and 271–296 (EGDQ…VHFH). WWE domains are found at residues 298 to 361 (PYRW…RLST) and 364 to 458 (SVTK…KVCR). Position 474 is an ADP-ribosylcysteine (C474). One can recognise a PARP catalytic domain in the interval 484 to 698 (IPDYWDSSAL…ILLALGSLFS (215 aa)). ADP-ribosyl aspartic acid is present on residues D600 and D611.

It belongs to the ARTD/PARP family. In terms of assembly, interacts with PARP11; this interaction plays a key role in zika virus suppression. Interacts with ISG15. Post-translationally, auto-mono-ADP-ribosylated. In terms of processing, phosphorylated by PRKD1.

It localises to the nucleus. It is found in the golgi apparatus. Its subcellular location is the trans-Golgi network. The protein resides in the cytoplasm. The protein localises to the stress granule. The enzyme catalyses L-aspartyl-[protein] + NAD(+) = 4-O-(ADP-D-ribosyl)-L-aspartyl-[protein] + nicotinamide. The catalysed reaction is L-cysteinyl-[protein] + NAD(+) = S-(ADP-D-ribosyl)-L-cysteinyl-[protein] + nicotinamide + H(+). Mono-ADP-ribosyltransferase that mediates mono-ADP-ribosylation of target proteins. Acts as an antiviral factor by cooperating with PARP11 to suppress Zika virus replication. Displays anti-alphavirus activity during IFN-gamma immune activation by directly ADP-ribosylating the alphaviral non-structural proteins nsP3 and nsP4. Acts as a component of the PRKD1-driven regulatory cascade that selectively controls a major branch of the basolateral transport pathway by catalyzing the MARylation of GOLGA1. Acts also as a key regulator of mitochondrial function, protein translation, and inflammation. Inhibits PINK1/Parkin-dependent mitophagy and promotes cartilage degeneration by inhibiting the ubiquitination and SUMOylation of MFN1/2 by upregulating ISG15 and ISGylation. This Homo sapiens (Human) protein is Protein mono-ADP-ribosyltransferase PARP12.